A 160-amino-acid polypeptide reads, in one-letter code: Cytochrome b6-f complex subunit 4 (160 aa).

A run of 3 helical transmembrane segments spans residues 36–56, 95–115, and 131–151; these read LLYI…GLAV, LLGV…PFLE, and TVFL…TLPI.

This sequence belongs to the cytochrome b family. PetD subfamily. In terms of assembly, the 4 large subunits of the cytochrome b6-f complex are cytochrome b6, subunit IV (17 kDa polypeptide, petD), cytochrome f and the Rieske protein, while the 4 small subunits are petG, petL, petM and petN. The complex functions as a dimer.

The protein localises to the plastid. The protein resides in the chloroplast thylakoid membrane. Component of the cytochrome b6-f complex, which mediates electron transfer between photosystem II (PSII) and photosystem I (PSI), cyclic electron flow around PSI, and state transitions. In Lotus japonicus (Lotus corniculatus var. japonicus), this protein is Cytochrome b6-f complex subunit 4.